Consider the following 466-residue polypeptide: L-seryl-tRNA(Sec) selenium transferase (466 aa).

Position 293 is an N6-(pyridoxal phosphate)lysine (Lys293).

The protein belongs to the SelA family. Pyridoxal 5'-phosphate is required as a cofactor.

It is found in the cytoplasm. The catalysed reaction is L-seryl-tRNA(Sec) + selenophosphate + H(+) = L-selenocysteinyl-tRNA(Sec) + phosphate. It functions in the pathway aminoacyl-tRNA biosynthesis; selenocysteinyl-tRNA(Sec) biosynthesis; selenocysteinyl-tRNA(Sec) from L-seryl-tRNA(Sec) (bacterial route): step 1/1. In terms of biological role, converts seryl-tRNA(Sec) to selenocysteinyl-tRNA(Sec) required for selenoprotein biosynthesis. The sequence is that of L-seryl-tRNA(Sec) selenium transferase from Desulfotalea psychrophila (strain LSv54 / DSM 12343).